A 554-amino-acid chain; its full sequence is Glucose-6-phosphate isomerase (554 aa).

The residue at position 2 (serine 2) is an N-acetylserine. A Phosphothreonine modification is found at threonine 53. D-glucose 6-phosphate is bound by residues glycine 168 to serine 169, serine 218 to threonine 223, glutamine 363, glutamate 367, histidine 398, and lysine 520. The residue at position 220 (threonine 220) is a Phosphothreonine. Catalysis depends on glutamate 367, which acts as the Proton donor. Active-site residues include histidine 398 and lysine 520.

The protein belongs to the GPI family. Homodimer.

The protein localises to the cytoplasm. It localises to the cytosol. It catalyses the reaction alpha-D-glucose 6-phosphate = beta-D-fructose 6-phosphate. The protein operates within carbohydrate degradation; glycolysis; D-glyceraldehyde 3-phosphate and glycerone phosphate from D-glucose: step 2/4. Strongly inhibited by the polyol (sugar alcohol) phosphate D-glucitol 6-phosphate (D-sorbitol 6-phosphate). Also inhibited by the polyol (sugar alcohol) phosphate D-ribitol 5-phosphate. In terms of biological role, in the cytoplasm, catalyzes the conversion of glucose-6-phosphate to fructose-6-phosphate, the second step in glycolysis, and the reverse reaction during gluconeogenesis. This is Glucose-6-phosphate isomerase (PGI1) from Saccharomyces cerevisiae (strain ATCC 204508 / S288c) (Baker's yeast).